The sequence spans 310 residues: Hairy/enhancer-of-split related with YRPW motif-like protein (310 aa).

Positions 1–21 are disordered; that stretch reads MKRPHDYSSPDSDTDELIDVG. Over residues 12–21 the composition is skewed to acidic residues; it reads SDTDELIDVG. A bHLH domain is found at 43 to 98; sequence ARKKRRGIIEKRRRDRINHSLSELRRLVPSAFEKQGSSKLEKAEILQMTVDHLKLL. In terms of domain architecture, Orange spans 116 to 152; the sequence is YRTLGFRECVGEVVRYLSSLEGVESSDPIGARLVSHL. Low complexity-rich tracts occupy residues 182 to 192 and 261 to 273; these read LQAASPPASST and PSSS…SSPP. Disordered regions lie at residues 182–208 and 248–310; these read LQAA…HGTA and HRLQ…IGAF. Over residues 293 to 302 the composition is skewed to polar residues; sequence LSSSSKSAQA.

This sequence belongs to the HEY family.

The protein resides in the nucleus. In terms of biological role, transcriptional repressor which functions as a downstream effector of Notch signaling. This is Hairy/enhancer-of-split related with YRPW motif-like protein (heyl) from Danio rerio (Zebrafish).